Reading from the N-terminus, the 266-residue chain is tRNA (guanine-N(7)-)-methyltransferase (266 aa).

A disordered region spans residues 1-32 (MSDHGRMHIPESGLATPAAAHSDDPPHPHFNR). The S-adenosyl-L-methionine site is built by glutamate 96, glutamate 121, aspartate 148, and aspartate 171. The active site involves aspartate 171. Substrate contacts are provided by lysine 175 and aspartate 207.

This sequence belongs to the class I-like SAM-binding methyltransferase superfamily. TrmB family.

The enzyme catalyses guanosine(46) in tRNA + S-adenosyl-L-methionine = N(7)-methylguanosine(46) in tRNA + S-adenosyl-L-homocysteine. It participates in tRNA modification; N(7)-methylguanine-tRNA biosynthesis. In terms of biological role, catalyzes the formation of N(7)-methylguanine at position 46 (m7G46) in tRNA. This chain is tRNA (guanine-N(7)-)-methyltransferase, found in Mycolicibacterium vanbaalenii (strain DSM 7251 / JCM 13017 / BCRC 16820 / KCTC 9966 / NRRL B-24157 / PYR-1) (Mycobacterium vanbaalenii).